Reading from the N-terminus, the 390-residue chain is Guanidine hydrolase (390 aa).

Residues histidine 174, aspartate 199, histidine 201, aspartate 203, aspartate 291, and aspartate 293 each contribute to the Ni(2+) site.

The protein belongs to the arginase family. As to quaternary structure, homohexamer. The cofactor is Ni(2+).

The protein resides in the cytoplasm. It carries out the reaction guanidine + H2O = urea + NH4(+). With respect to regulation, activation of GdmH depends on the presence of the accessory proteins GhaA (Sll1078) and GhaB (Sll1079), which load nickel into the active site. Hydrolase activity is slightly activated in the presence of GTP. It does not require ATP or NAD(P)H. Addition of Ca(2+), Mn(2+), Fe(2+) or Fe(3+) has no consistent effects, whereas addition of Co(2+), Cu(2+) or Zn(2+) inhibits the activity. Functionally, catalyzes the hydrolysis of guanidine into urea and ammonium. Is highly specific for free guanidine. At pH 8, also catalyzes the release of urea from methylguanidine but with significantly reduced specific activity compared with that for guanidine. Cannot hydrolyze guanidinoacetate, guanidinopropionate, guanidinobutyrate, agmatine, arginine or creatine. Required to use guanidine as the sole nitrogen source for growth. Overexpression of the gene accelerates guanidine degradation and promotes biomass growth. The polypeptide is Guanidine hydrolase (Synechocystis sp. (strain ATCC 27184 / PCC 6803 / Kazusa)).